A 254-amino-acid polypeptide reads, in one-letter code: Small ribosomal subunit protein uS2 (254 aa).

The protein belongs to the universal ribosomal protein uS2 family.

This is Small ribosomal subunit protein uS2 from Legionella pneumophila (strain Lens).